The primary structure comprises 699 residues: Cyclic AMP-dependent transcription factor ATF-6 beta (699 aa).

A2 carries the post-translational modification N-acetylalanine. The Cytoplasmic portion of the chain corresponds to 2–393 (AELMLLSEIA…GLKLGSGNRK (392 aa)). Disordered stretches follow at residues 59 to 114 (SLDV…QVPG), 218 to 246 (VQIS…PKPV), and 290 to 313 (EGPA…PGNS). Pro residues predominate over residues 68–78 (PPEPPWDPLPI). Over residues 86–109 (SEPSSPCSSSSLSSESSHLSTEPP) the composition is skewed to low complexity. The bZIP domain maps to 322 to 385 (LLKRQQRMIK…EALLAENSGL (64 aa)). Residues 324-344 (KRQQRMIKNRESACQSRRKKK) form a basic motif region. The interval 347-354 (LQGLEARL) is leucine-zipper. The helical; Signal-anchor for type II membrane protein transmembrane segment at 394 to 414 (VVCIMVFLLFIAFNFGPVSIS) threads the bilayer. Residues 415 to 699 (EPPPAPMSPR…ASQPLYLNHP (285 aa)) are Lumenal-facing. Residues 417–474 (PPAPMSPRMSREEPRPQRHLLGFSEPGPAHGMEPLREAAQSPGEQQPSSAGRPSFRNL) are disordered. Polar residues predominate over residues 458–467 (PGEQQPSSAG). 2 N-linked (GlcNAc...) asparagine glycosylation sites follow: N473 and N502. A compositionally biased stretch (basic residues) spans 519-529 (RHQRGRRKIPH). The interval 519-563 (RHQRGRRKIPHRAQERQKSQLRKKSPPVKPVPTQPPGPPERDPVG) is disordered. Over residues 545–556 (PVKPVPTQPPGP) the composition is skewed to pro residues. Residues N607, N624, and N673 are each glycosylated (N-linked (GlcNAc...) asparagine). Positions 657 to 699 (STVPPSLRKQPSPSPGNTTGGPLPGSAASPAHQASQPLYLNHP) are disordered. The segment covering 680-693 (PGSAASPAHQASQP) has biased composition (low complexity).

It belongs to the bZIP family. ATF subfamily. As to quaternary structure, homodimer and heterodimer with ATF6-alpha. The dimer interacts with the nuclear transcription factor Y (NF-Y) trimer through direct binding to NF-Y subunit C (NF-YC). Post-translationally, N-glycosylated. In terms of processing, during unfolded protein response, a fragment of approximately 60 kDa containing the cytoplasmic transcription factor domain is released by proteolysis. The cleavage is probably performed sequentially by site-1 (MBTPS1, S1P) and site-2 (MBTPS2, S2P) proteases.

It is found in the endoplasmic reticulum membrane. The protein resides in the nucleus. Precursor of the transcription factor form (Processed cyclic AMP-dependent transcription factor ATF-6 beta), which is embedded in the endoplasmic reticulum membrane. Endoplasmic reticulum stress promotes processing of this form, releasing the transcription factor form that translocates into the nucleus, where it activates transcription of genes involved in the unfolded protein response (UPR). Functionally, transcription factor that acts in the unfolded protein response (UPR) pathway by activating UPR target genes induced during ER stress. Binds DNA on the 5'-CCAC[GA]-3' half of the ER stress response element (ERSE) (5'-CCAATN(9)CCAC[GA]-3') when NF-Y is bound to ERSE. The sequence is that of Cyclic AMP-dependent transcription factor ATF-6 beta (Atf6b) from Mus musculus (Mouse).